Reading from the N-terminus, the 388-residue chain is Protein DJ-1 homolog D (388 aa).

PfpI endopeptidase domains are found at residues 5 to 190 (RTVL…KALG) and 198 to 383 (KRIL…ALLG). Residue Cys120 is the Nucleophile of the active site. Cys120 carries the cysteine sulfenic acid (-SOH) modification. Residue His121 is part of the active site. Catalysis depends on Cys313, which acts as the Nucleophile. Cys313 carries the cysteine sulfinic acid (-SO2H) modification. The active site involves His314.

Belongs to the peptidase C56 family. In terms of assembly, homotrimer. Post-translationally, cys-120 and Cys-313 are oxidized to sulfinic acid.

The catalysed reaction is (R)-S-lactoylglutathione = methylglyoxal + glutathione. Its function is as follows. Possesses glyoxalase I activity. Catalyzes the conversion of hemimercaptal, formed from methylglyoxal and glutathione, to S-lactoylglutathione. May be involved in oxidative stress response. This chain is Protein DJ-1 homolog D (DJ1D), found in Arabidopsis thaliana (Mouse-ear cress).